A 39-amino-acid chain; its full sequence is Omega-theraphotoxin-Bs1b (39 aa).

3 cysteine pairs are disulfide-bonded: cysteine 4–cysteine 25, cysteine 8–cysteine 31, and cysteine 17–cysteine 36.

It belongs to the neurotoxin 12 (Hwtx-2) family. 06 (TXP1) subfamily. Expressed by the venom gland.

The protein localises to the secreted. Functionally, inhibits voltage-gated calcium channels (Cav) in rat cerebellar granule cells. Has insecticidal activity. The protein is Omega-theraphotoxin-Bs1b of Brachypelma smithi (Mexican red knee tarantula).